Reading from the N-terminus, the 987-residue chain is Ephrin type-B receptor 4 (987 aa).

An N-terminal signal peptide occupies residues 1–15 (MELRVLLCWASLAAA). The Extracellular segment spans residues 16-539 (LEETLLNTKL…ESEGWREQLA (524 aa)). One can recognise an Eph LBD domain in the interval 17–202 (EETLLNTKLE…FYKKCAQLTV (186 aa)). Disulfide bonds link cysteine 61-cysteine 184 and cysteine 97-cysteine 107. Residues asparagine 203, asparagine 335, and asparagine 426 are each glycosylated (N-linked (GlcNAc...) asparagine). Fibronectin type-III domains are found at residues 323 to 432 (PPSA…TDRE) and 436 to 529 (AVSD…TQLD). A helical transmembrane segment spans residues 540-560 (LIAGTAVVGVVLVLVVIVVAV). At 561-987 (LCLRKQSNGR…GGTGGPAPQY (427 aa)) the chain is on the cytoplasmic side. A Protein kinase domain is found at 615-899 (VKIEEVIGAG…ENGGASHPLL (285 aa)). ATP-binding positions include 621-629 (IGAGEFGEV) and lysine 647. Catalysis depends on aspartate 740, which acts as the Proton acceptor. Phosphoserine occurs at positions 769, 770, 911, and 943. Residues 907-971 (SAFGSVGEWL…LASVQHMKSQ (65 aa)) enclose the SAM domain. The interval 965 to 987 (VQHMKSQAKPGTPGGTGGPAPQY) is disordered. Threonine 976 carries the phosphothreonine modification. The span at 976-987 (TPGGTGGPAPQY) shows a compositional bias: gly residues. Residues 985–987 (PQY) carry the PDZ-binding motif. Residue tyrosine 987 is modified to Phosphotyrosine.

Belongs to the protein kinase superfamily. Tyr protein kinase family. Ephrin receptor subfamily. As to quaternary structure, heterotetramer upon binding of the ligand. The heterotetramer is composed of an ephrin dimer and a receptor dimer. Oligomerization is probably required to induce biological responses. Interacts with RASA1; the interaction depends on EPHB4 tyrosine-phosphorylation. Post-translationally, phosphorylated; autophosphorylation is stimulated by EFNB2. Abundantly expressed in placenta but also detected in kidney, liver, lung, pancreas, skeletal muscle and heart. Expressed in primitive and myeloid, but not lymphoid, hematopoietic cells. Also observed in cell lines derived from liver, breast, colon, lung, melanocyte and cervix.

The protein resides in the cell membrane. The catalysed reaction is L-tyrosyl-[protein] + ATP = O-phospho-L-tyrosyl-[protein] + ADP + H(+). Functionally, receptor tyrosine kinase which binds promiscuously transmembrane ephrin-B family ligands residing on adjacent cells, leading to contact-dependent bidirectional signaling into neighboring cells. The signaling pathway downstream of the receptor is referred to as forward signaling while the signaling pathway downstream of the ephrin ligand is referred to as reverse signaling. Together with its cognate ligand/functional ligand EFNB2 it is involved in the regulation of cell adhesion and migration, and plays a central role in heart morphogenesis, angiogenesis and blood vessel remodeling and permeability. EPHB4-mediated forward signaling controls cellular repulsion and segregation from EFNB2-expressing cells. The protein is Ephrin type-B receptor 4 (EPHB4) of Homo sapiens (Human).